A 586-amino-acid chain; its full sequence is Protein NRT1/ PTR FAMILY 5.3 (586 aa).

11 helical membrane-spanning segments follow: residues 77 to 97, 100 to 120, 141 to 161, 189 to 209, 217 to 237, 334 to 354, 370 to 390, 408 to 428, 449 to 469, 492 to 512, and 538 to 558; these read WVGT…AHFG, ITFV…TLSV, ASVI…IGTG, FFNW…TVLV, WAIG…IFLL, PVLF…TLFI, IPPA…IVIY, ITLL…MIIA, AVPI…MGLA, LGTS…SILL, and NYYM…LVVI.

The protein belongs to the major facilitator superfamily. Proton-dependent oligopeptide transporter (POT/PTR) (TC 2.A.17) family. As to expression, expressed in roots and siliques.

The protein resides in the membrane. Peptide transporter. The chain is Protein NRT1/ PTR FAMILY 5.3 (NPF5.3) from Arabidopsis thaliana (Mouse-ear cress).